The primary structure comprises 437 residues: MTLAELLPSVGMTGEPALETGLWPLGTRLERGELLLGGVPATELAARFGTPCQVLDEGTVRARARAFREALPEAEVVFAGKALPCREVYRWVADEGLSLDVCSAGELAIARSVGFPAERVLLHGNVKTPEDLKAALGYGVGRVVVDSFDEIEQLGALAEGPQDVLVRVTPGVDPRTHRAVATGVEDQKFGFSLAGGDALEAVLRVVEQPSLRLVGLHCHVGSQVRHVAVYEEAARRVVGLIASCGVRIEQLDLGGGFAVPYLPGEGEFDLGGFAHRVRVALSHECALRRVPVPRLSIEPGRAVVARAGVTLYRVAAVKRGVRRVFVAVDGGMSDNPRPALYGSRYAVRLVRRGGRRAPVTVVGRHCEAGDVLAEDVPLPEDVRAGDLLAVPVTGAYHHALASNYNAVGRPPVVGVRDGVARVLVRRETEEDLLRREV.

Lys-81 carries the post-translational modification N6-(pyridoxal phosphate)lysine. Pyridoxal 5'-phosphate-binding positions include Gly-256 and 298–301; that span reads EPGR. 3 residues coordinate substrate: Arg-301, Arg-337, and Tyr-341. Catalysis depends on Cys-366, which acts as the Proton donor. Substrate-binding residues include Glu-367 and Tyr-396. Residue Tyr-396 participates in pyridoxal 5'-phosphate binding.

The protein belongs to the Orn/Lys/Arg decarboxylase class-II family. LysA subfamily. In terms of assembly, homodimer. Pyridoxal 5'-phosphate serves as cofactor.

The catalysed reaction is meso-2,6-diaminopimelate + H(+) = L-lysine + CO2. The protein operates within amino-acid biosynthesis; L-lysine biosynthesis via DAP pathway; L-lysine from DL-2,6-diaminopimelate: step 1/1. In terms of biological role, specifically catalyzes the decarboxylation of meso-diaminopimelate (meso-DAP) to L-lysine. This chain is Diaminopimelate decarboxylase, found in Actinosynnema pretiosum subsp. auranticum.